A 731-amino-acid chain; its full sequence is Small conductance calcium-activated potassium channel protein 3 (731 aa).

Over residues 1-11 the composition is skewed to basic and acidic residues; sequence MDTSGHFHDSG. Disordered regions lie at residues 1–170 and 239–258; these read MDTS…SNPF and ATHNHQHAGTTASSTTFPKA. Over residues 30–40 the composition is skewed to low complexity; sequence QQQQQQQQQQQ. Residues 41-51 show a composition bias toward pro residues; sequence QPPPPAPPAAP. Low complexity predominate over residues 52 to 95; that stretch reads QQPLGPSLQPQPPQLQQQQQQQQQQQQQQPPHPLSQLAQLQSQP. Positions 112 to 132 are enriched in polar residues; that stretch reads PSSNSTAILHPSSRQGSQLNL. Low complexity predominate over residues 138–147; that stretch reads GHSPSSTATS. Residue serine 167 is modified to Phosphoserine. The segment covering 239-256 has biased composition (polar residues); the sequence is ATHNHQHAGTTASSTTFP. The helical transmembrane segment at 288–308 threads the bilayer; it reads LIFGMFGIVVMVIETELSWGL. A helical transmembrane segment spans residues 315–335; that stretch reads FSLALKCLISLSTIILLGLII. Residues 366–386 form a helical membrane-spanning segment; that stretch reads ISLEMLVCAIHPIPGEYKFFW. A helical transmembrane segment spans residues 405–425; it reads IILSIPMFLRLYLIARVMLLH. A helical transmembrane segment spans residues 454–474; it reads LMTICPGTVLLVFSISLWIIA. The segment at residues 494–514 is an intramembrane region (pore-forming); the sequence is FLGAMWLISITFLSIGYGDMV. A helical membrane pass occupies residues 523-543; sequence VCLLTGIMGAGCTALVVAVVA. Residues 561–637 are calmodulin-binding; it reads DTQLTKRIKN…LVDLSKMQNV (77 aa). A coiled-coil region spans residues 642–669; that stretch reads ITELNDRSEDLEKQIGSLESKLEHLTAS. The segment at 709–731 is disordered; the sequence is ISDSPIGVSSTSFPTPYTSSSSC. Positions 717-731 are enriched in low complexity; the sequence is SSTSFPTPYTSSSSC.

It belongs to the potassium channel KCNN family. KCa2.3/KCNN3 subfamily. In terms of assembly, homodimer. Heteromultimer with KCNN2 or KCNN1; this modulates plasma membrane expression and consequently the small conductance calcium-activated potassium channel activity. The complex is composed of 4 channel subunits each of which binds to a calmodulin subunit which regulates the channel activity through calcium-binding. Interacts with CALM1. Widely distributed in human tissues and is present at 20-60% of KCNN3 in the brain.

It is found in the cell membrane. Its subcellular location is the cytoplasm. The protein localises to the myofibril. It localises to the sarcomere. The protein resides in the z line. It catalyses the reaction K(+)(in) = K(+)(out). With respect to regulation, inhibited by bee venom neurotoxin apamin. Functionally, small conductance calcium-activated potassium channel that mediates the voltage-independent transmembrane transfer of potassium across the cell membrane through a constitutive interaction with calmodulin which binds the intracellular calcium allowing its opening. The current is characterized by a voltage-independent activation, an intracellular calcium concentration increase-dependent activation and a single-channel conductance of 10 picosiemens. Also presents an inwardly rectifying current, thus reducing its already small outward conductance of potassium ions, which is particularly the case when the membrane potential displays positive values, above + 20 mV. Activation is followed by membrane hyperpolarization. Thought to regulate neuronal excitability by contributing to the slow component of synaptic afterhyperpolarization. In terms of biological role, does not function as a small conductance calcium-activated potassium channel. Selectively suppresses endogenous KCNN3 currents, in a dominant-negative fashion by decreasing the abundance of functional channels in the plasma membrane, possibly by selectively coassembling with and sequestering native KCNN3 protein in intracellular compartments. This dominant inhibitory effect extends to other members of the SK subfamily. The polypeptide is Small conductance calcium-activated potassium channel protein 3 (Homo sapiens (Human)).